Consider the following 185-residue polypeptide: Peptidyl-tRNA hydrolase (185 aa).

Phe-14 serves as a coordination point for tRNA. The Proton acceptor role is filled by His-19. Residues Tyr-64, Asn-66, and Asn-112 each coordinate tRNA.

It belongs to the PTH family. Monomer.

It localises to the cytoplasm. It carries out the reaction an N-acyl-L-alpha-aminoacyl-tRNA + H2O = an N-acyl-L-amino acid + a tRNA + H(+). Hydrolyzes ribosome-free peptidyl-tRNAs (with 1 or more amino acids incorporated), which drop off the ribosome during protein synthesis, or as a result of ribosome stalling. Its function is as follows. Catalyzes the release of premature peptidyl moieties from peptidyl-tRNA molecules trapped in stalled 50S ribosomal subunits, and thus maintains levels of free tRNAs and 50S ribosomes. The sequence is that of Peptidyl-tRNA hydrolase from Exiguobacterium sp. (strain ATCC BAA-1283 / AT1b).